We begin with the raw amino-acid sequence, 122 residues long: MIQPQTHLNVADNSGARKLMCIRIIGASNRRYAYIGDIVVAVIKEAVPNTPLERSEVIRAVIVRTCKELKRSNGIIIQYDDNAAVVIDQEGNPKGTRIFCAIARELRQFNFTKIVSLAPEIL.

The protein belongs to the universal ribosomal protein uL14 family. In terms of assembly, part of the 50S ribosomal subunit.

The protein localises to the plastid. It is found in the chloroplast. Binds to 23S rRNA. The polypeptide is Large ribosomal subunit protein uL14c (Lotus japonicus (Lotus corniculatus var. japonicus)).